The primary structure comprises 156 residues: tRNA (cytidine(34)-2'-O)-methyltransferase (156 aa).

The S-adenosyl-L-methionine site is built by G102, L124, and S132.

The protein belongs to the class IV-like SAM-binding methyltransferase superfamily. RNA methyltransferase TrmH family. TrmL subfamily. As to quaternary structure, homodimer.

It is found in the cytoplasm. It catalyses the reaction cytidine(34) in tRNA + S-adenosyl-L-methionine = 2'-O-methylcytidine(34) in tRNA + S-adenosyl-L-homocysteine + H(+). The enzyme catalyses 5-carboxymethylaminomethyluridine(34) in tRNA(Leu) + S-adenosyl-L-methionine = 5-carboxymethylaminomethyl-2'-O-methyluridine(34) in tRNA(Leu) + S-adenosyl-L-homocysteine + H(+). Methylates the ribose at the nucleotide 34 wobble position in the two leucyl isoacceptors tRNA(Leu)(CmAA) and tRNA(Leu)(cmnm5UmAA). Catalyzes the methyl transfer from S-adenosyl-L-methionine to the 2'-OH of the wobble nucleotide. The protein is tRNA (cytidine(34)-2'-O)-methyltransferase of Burkholderia cenocepacia (strain HI2424).